The chain runs to 452 residues: GATA-binding factor 2 (452 aa).

Positions 130–182 are disordered; that stretch reads GGSLYPGTGSSACPSSSHSSPHLFGFPPTPPKDVSPDPGPASPPSSSRLEDKD. Residues 139-151 show a composition bias toward low complexity; sequence SSACPSSSHSSPH. Pro residues predominate over residues 156–172; the sequence is PPTPPKDVSPDPGPASP. GATA-type zinc fingers lie at residues 267–291 and 321–345; these read CVNC…CNAC and CANC…CNAC. Positions 426-438 are enriched in polar residues; it reads QTPTPIHPSSSLS. Residues 426 to 452 are disordered; that stretch reads QTPTPIHPSSSLSFGHPHHSSMVTAMG.

As to expression, expressed in the developing ventral blood island, and in the embryonic nervous system.

It localises to the nucleus. This is GATA-binding factor 2 (gata2) from Xenopus laevis (African clawed frog).